The primary structure comprises 192 residues: Pyridoxal 5'-phosphate synthase subunit PdxT (192 aa).

L-glutamine is bound at residue Gly-50 to Ser-52. Cys-82 (nucleophile) is an active-site residue. Residues Arg-109 and Ile-136 to Arg-137 contribute to the L-glutamine site. Catalysis depends on charge relay system residues His-172 and Glu-174.

The protein belongs to the glutaminase PdxT/SNO family. As to quaternary structure, in the presence of PdxS, forms a dodecamer of heterodimers. Only shows activity in the heterodimer.

The catalysed reaction is aldehydo-D-ribose 5-phosphate + D-glyceraldehyde 3-phosphate + L-glutamine = pyridoxal 5'-phosphate + L-glutamate + phosphate + 3 H2O + H(+). The enzyme catalyses L-glutamine + H2O = L-glutamate + NH4(+). It functions in the pathway cofactor biosynthesis; pyridoxal 5'-phosphate biosynthesis. Catalyzes the hydrolysis of glutamine to glutamate and ammonia as part of the biosynthesis of pyridoxal 5'-phosphate. The resulting ammonia molecule is channeled to the active site of PdxS. This Haemophilus influenzae (strain PittEE) protein is Pyridoxal 5'-phosphate synthase subunit PdxT.